A 469-amino-acid chain; its full sequence is Trigger factor (469 aa).

In terms of domain architecture, PPIase FKBP-type spans 162 to 243 (GDFVSIDLSA…VKSVKERELP (82 aa)). The interval 438 to 469 (GPSGEQAAEDSAEESTDAAEGEAAEDADDTDK) is disordered. Positions 444–469 (AAEDSAEESTDAAEGEAAEDADDTDK) are enriched in acidic residues.

This sequence belongs to the FKBP-type PPIase family. Tig subfamily.

The protein resides in the cytoplasm. It catalyses the reaction [protein]-peptidylproline (omega=180) = [protein]-peptidylproline (omega=0). Involved in protein export. Acts as a chaperone by maintaining the newly synthesized protein in an open conformation. Functions as a peptidyl-prolyl cis-trans isomerase. This is Trigger factor from Mycolicibacterium smegmatis (strain ATCC 700084 / mc(2)155) (Mycobacterium smegmatis).